Consider the following 66-residue polypeptide: Large ribosomal subunit protein bL35 (66 aa).

Basic residues predominate over residues 1 to 16 (MPKQKTHRASAKRFKR). The disordered stretch occupies residues 1–20 (MPKQKTHRASAKRFKRTGSG).

Belongs to the bacterial ribosomal protein bL35 family.

This Streptococcus thermophilus (strain ATCC BAA-250 / LMG 18311) protein is Large ribosomal subunit protein bL35.